The sequence spans 202 residues: Hypoxanthine-guanine phosphoribosyltransferase (202 aa).

Diphosphate is bound by residues lysine 66 and glycine 67. Mg(2+) contacts are provided by glutamate 122 and aspartate 123. The Proton acceptor role is filled by aspartate 126. Residues lysine 154, 175–176 (FV), and aspartate 182 each bind GMP. A diphosphate-binding site is contributed by arginine 188.

It belongs to the purine/pyrimidine phosphoribosyltransferase family. The cofactor is Mg(2+).

It is found in the cytoplasm. It carries out the reaction IMP + diphosphate = hypoxanthine + 5-phospho-alpha-D-ribose 1-diphosphate. The enzyme catalyses GMP + diphosphate = guanine + 5-phospho-alpha-D-ribose 1-diphosphate. The protein operates within purine metabolism; IMP biosynthesis via salvage pathway; IMP from hypoxanthine: step 1/1. Its pathway is purine metabolism; GMP biosynthesis via salvage pathway; GMP from guanine: step 1/1. In terms of biological role, purine salvage pathway enzyme that catalyzes the transfer of the ribosyl-5-phosphate group from 5-phospho-alpha-D-ribose 1-diphosphate (PRPP) to the N9 position of the 6-oxopurines hypoxanthine and guanine to form the corresponding ribonucleotides IMP (inosine 5'-monophosphate) and GMP (guanosine 5'-monophosphate), with the release of PPi. This Mycobacterium tuberculosis (strain CDC 1551 / Oshkosh) protein is Hypoxanthine-guanine phosphoribosyltransferase (hpt).